The sequence spans 452 residues: Pup--protein ligase (452 aa).

Glutamate 9 lines the Mg(2+) pocket. Arginine 53 contributes to the ATP binding site. Tyrosine 55 is a Mg(2+) binding site. Catalysis depends on aspartate 57, which acts as the Proton acceptor. Glutamate 63 contacts Mg(2+). Residues threonine 66 and tryptophan 419 each coordinate ATP.

This sequence belongs to the Pup ligase/Pup deamidase family. Pup-conjugating enzyme subfamily.

It catalyses the reaction ATP + [prokaryotic ubiquitin-like protein]-L-glutamate + [protein]-L-lysine = ADP + phosphate + N(6)-([prokaryotic ubiquitin-like protein]-gamma-L-glutamyl)-[protein]-L-lysine.. It participates in protein degradation; proteasomal Pup-dependent pathway. It functions in the pathway protein modification; protein pupylation. Functionally, catalyzes the covalent attachment of the prokaryotic ubiquitin-like protein modifier Pup to the proteasomal substrate proteins, thereby targeting them for proteasomal degradation. This tagging system is termed pupylation. The ligation reaction involves the side-chain carboxylate of the C-terminal glutamate of Pup and the side-chain amino group of a substrate lysine. The polypeptide is Pup--protein ligase (Streptosporangium roseum (strain ATCC 12428 / DSM 43021 / JCM 3005 / KCTC 9067 / NCIMB 10171 / NRRL 2505 / NI 9100)).